Reading from the N-terminus, the 388-residue chain is Sulfate adenylyltransferase (388 aa).

This sequence belongs to the sulfate adenylyltransferase family.

The catalysed reaction is sulfate + ATP + H(+) = adenosine 5'-phosphosulfate + diphosphate. Its pathway is sulfur metabolism; hydrogen sulfide biosynthesis; sulfite from sulfate: step 1/3. In Trichodesmium erythraeum (strain IMS101), this protein is Sulfate adenylyltransferase.